We begin with the raw amino-acid sequence, 151 residues long: Putative calcium-binding protein CML23 (151 aa).

EF-hand domains lie at valine 2–glutamate 37, methionine 39–aspartate 74, glutamate 84–histidine 119, and leucine 120–alanine 151. Ca(2+) contacts are provided by aspartate 15, aspartate 17, aspartate 19, lysine 21, glutamate 26, aspartate 52, aspartate 54, aspartate 56, and glutamate 63. Positions 133, 135, 137, and 144 each coordinate Ca(2+).

In terms of biological role, potential calcium sensor. In Oryza sativa subsp. japonica (Rice), this protein is Putative calcium-binding protein CML23 (CML23).